The sequence spans 263 residues: tRNA pseudouridine synthase A (263 aa).

Residue Asp54 is the Nucleophile of the active site. Tyr113 provides a ligand contact to substrate.

This sequence belongs to the tRNA pseudouridine synthase TruA family. Homodimer.

It carries out the reaction uridine(38/39/40) in tRNA = pseudouridine(38/39/40) in tRNA. Functionally, formation of pseudouridine at positions 38, 39 and 40 in the anticodon stem and loop of transfer RNAs. The chain is tRNA pseudouridine synthase A from Lactobacillus helveticus (strain DPC 4571).